The chain runs to 238 residues: MPSDRRPSQRRNRSKSRDYRGARSKVTRADTRNRDDTLALSMYQGPPSADQGNNMADAPRFGFWTSVSQCLQYLWARRHLGLLLLLFWTLVILFRPVNTAKLPILAEAAELEPPLGNMLDFFFPTACIIRDNQVVVACNNQPYLSESECLKSKCCSSTSGTIIKCYAPVRDKPTQVLRVFGLAAISILVLGFLPMCCCSMCWRRKRMNRMLKVLKKQKSKGKKPKGRKASEERALLSH.

Positions 1-30 (MPSDRRPSQRRNRSKSRDYRGARSKVTRAD) are disordered. Over 1-79 (MPSDRRPSQR…CLQYLWARRH (79 aa)) the chain is Cytoplasmic. Residues 15–30 (KSRDYRGARSKVTRAD) show a composition bias toward basic and acidic residues. Residues 80 to 100 (LGLLLLLFWTLVILFRPVNTA) traverse the membrane as a helical segment. Over 101 to 178 (KLPILAEAAE…VRDKPTQVLR (78 aa)) the chain is Extracellular. The P-type domain maps to 118–176 (MLDFFFPTACIIRDNQVVVACNNQPYLSESECLKSKCCSSTSGTIIKCYAPVRDKPTQV). Residues 179-199 (VFGLAAISILVLGFLPMCCCS) traverse the membrane as a helical segment. Residues 200–238 (MCWRRKRMNRMLKVLKKQKSKGKKPKGRKASEERALLSH) lie on the Cytoplasmic side of the membrane. A compositionally biased stretch (basic residues) spans 214–227 (LKKQKSKGKKPKGR). Positions 214–238 (LKKQKSKGKKPKGRKASEERALLSH) are disordered. Over residues 228–238 (KASEERALLSH) the composition is skewed to basic and acidic residues.

Its subcellular location is the membrane. This chain is Fmr1 neighbor protein, found in Mus musculus (Mouse).